The primary structure comprises 283 residues: Type III pantothenate kinase (283 aa).

9-16 (DIGNTRLK) lines the ATP pocket. Substrate-binding positions include Y116 and 123-126 (GVDR). D125 functions as the Proton acceptor in the catalytic mechanism. T149 provides a ligand contact to ATP. Position 211 (T211) interacts with substrate.

Belongs to the type III pantothenate kinase family. Homodimer. NH4(+) is required as a cofactor. It depends on K(+) as a cofactor.

Its subcellular location is the cytoplasm. The catalysed reaction is (R)-pantothenate + ATP = (R)-4'-phosphopantothenate + ADP + H(+). It participates in cofactor biosynthesis; coenzyme A biosynthesis; CoA from (R)-pantothenate: step 1/5. Functionally, catalyzes the phosphorylation of pantothenate (Pan), the first step in CoA biosynthesis. The sequence is that of Type III pantothenate kinase from Cupriavidus taiwanensis (strain DSM 17343 / BCRC 17206 / CCUG 44338 / CIP 107171 / LMG 19424 / R1) (Ralstonia taiwanensis (strain LMG 19424)).